The primary structure comprises 407 residues: Arylacetamide deacetylase-like 4 (407 aa).

Residues 1-4 (MAVP) lie on the Cytoplasmic side of the membrane. The chain crosses the membrane as a helical; Signal-anchor for type II membrane protein span at residues 5–25 (WLVLLLALPIFFLGVFVWAVF). At 26 to 407 (EHFLTTDIPA…NAVVSYIKGI (382 aa)) the chain is on the lumenal side. Positions 119-121 (HGG) match the Involved in the stabilization of the negatively charged intermediate by the formation of the oxyanion hole motif. N-linked (GlcNAc...) asparagine glycosylation is present at Asn168. Ser193 is a catalytic residue. Asn269 carries an N-linked (GlcNAc...) asparagine glycan. Active-site residues include Asp347 and His377.

The protein belongs to the 'GDXG' lipolytic enzyme family.

It is found in the membrane. This is Arylacetamide deacetylase-like 4 (AADACL4) from Homo sapiens (Human).